A 191-amino-acid polypeptide reads, in one-letter code: Protein GrpE (191 aa).

Positions 1 to 21 (MSDKKKNAEEFEETFSDKTSE) are enriched in basic and acidic residues. Positions 1–39 (MSDKKKNAEEFEETFSDKTSEDESTVENETVEENENEDV) are disordered. Over residues 22–38 (DESTVENETVEENENED) the composition is skewed to acidic residues.

This sequence belongs to the GrpE family. As to quaternary structure, homodimer.

It is found in the cytoplasm. In terms of biological role, participates actively in the response to hyperosmotic and heat shock by preventing the aggregation of stress-denatured proteins, in association with DnaK and GrpE. It is the nucleotide exchange factor for DnaK and may function as a thermosensor. Unfolded proteins bind initially to DnaJ; upon interaction with the DnaJ-bound protein, DnaK hydrolyzes its bound ATP, resulting in the formation of a stable complex. GrpE releases ADP from DnaK; ATP binding to DnaK triggers the release of the substrate protein, thus completing the reaction cycle. Several rounds of ATP-dependent interactions between DnaJ, DnaK and GrpE are required for fully efficient folding. This Tetragenococcus halophilus (Pediococcus halophilus) protein is Protein GrpE.